The following is a 342-amino-acid chain: Antihemorrhagic factor HSF (342 aa).

A signal peptide spans 1–19; that stretch reads MNSLVALVLLGQIIGSTLS. Cystatin fetuin-A-type domains are found at residues 22–130 and 141–254; these read VRGD…VKCH and RNCS…SNCV. The Cell attachment site motif lies at 23–25; the sequence is RGD. The indispensable for metalloproteinase inhibition stretch occupies residues 24-108; that stretch reads GDLECDDKEA…RQQHNHAVEM (85 aa). Disulfide bonds link cysteine 28–cysteine 332, cysteine 85–cysteine 96, cysteine 110–cysteine 129, cysteine 143–cysteine 146, cysteine 205–cysteine 217, and cysteine 230–cysteine 253. N-linked (GlcNAc...) asparagine glycosylation occurs at asparagine 142. A glycan (N-linked (GlcNAc...) asparagine) is linked at asparagine 204. Asparagine 282 carries an N-linked (GlcNAc...) asparagine glycan.

The protein belongs to the fetuin family. In terms of processing, cys-63 may exist in a mixed disulfide form with a thiol compound such as glutathione. As to expression, expressed by the liver.

Its subcellular location is the secreted. Its function is as follows. Inhibits hemorrhagic and proteolytic activities of metalloproteinases (HR1A, HR1B, HR2a, HR2b and H2 proteinase from T.flavodidis and brevilysins H3, H4, H6 and L4 from A.halys brevicaudus). Has no effect on brevilysins H2. Has no effect on papain and cathepsin-B. This Protobothrops flavoviridis (Habu) protein is Antihemorrhagic factor HSF.